Consider the following 370-residue polypeptide: Forkhead box protein I1-A (370 aa).

Disordered regions lie at residues 1-28 (MNPV…AQEA), 212-269 (DNGN…CPSP), and 342-370 (SSLP…QGRY). The segment at residues 127-221 (RPPYSYSALI…DNGNFRRKRK (95 aa)) is a DNA-binding region (fork-head). Residues 232–245 (AKREEDHVSPKGKE) are compositionally biased toward basic and acidic residues. Residues 349 to 370 (QKQPPYLQQLHPQQSPLYQGRY) show a composition bias toward low complexity.

In terms of tissue distribution, initially localized to the animal hemisphere (the presumptive ectoderm) of early-mid blastula embryos. Becomes restricted to head placodes, excluding the otic placodes, by the tailbud stages.

The protein localises to the nucleus. Functionally, transcription factor. Essential for ventral specification of the early cephalic (head) ectoderm during gastrulation, playing a role in the non-neural versus neural cell fate choice. Binds to DNA via the target sequence 5'-[AG]TAAA[CT]A-3', with 5'-ATAAACA-3' being the preferred binding site. The sequence is that of Forkhead box protein I1-A (foxi1-a) from Xenopus laevis (African clawed frog).